Reading from the N-terminus, the 198-residue chain is MPVGRKEQIVDCRAVMGLGEGGGLAQRGTFAEGLRNDVVVVAMSPGRRHITKPVCEITYGIREAGIQTSVLVLDAGGGIPSDAPQGSLGSTFGLKPDEARQVNRHKLCVIHFGNVKSHIIYKARLFLKYVTIPTIIVCQSPVDMEDFAKIGIKTLDVMPLEPKTEGTIVEIITGVVRGESSPQKKIDEIIESIKKHLG.

MCR is composed of three subunits: alpha, beta, and gamma. The function of proteins C and D is not known.

The sequence is that of Methyl-coenzyme M reductase operon protein C (mcrC) from Methanococcus vannielii.